The primary structure comprises 1179 residues: Protein FAM83H (1179 aa).

Positions 1–286 are DUF1669; the sequence is MARRSQSSSQ…LFAQSEPLVP (286 aa). The mediates interaction with CSNK1A1 and is required for FAM83H activity in keratin cytoskeleton organization stretch occupies residues 1 to 286; it reads MARRSQSSSQ…LFAQSEPLVP (286 aa). At T465 the chain carries Phosphothreonine. 2 disordered regions span residues 484–577 and 636–669; these read ADPD…GRAG and FPTK…DSFR. Residues S513, S514, S516, S523, S647, and S667 each carry the phosphoserine modification. T756 bears the Phosphothreonine mark. Phosphoserine is present on residues S759, S785, and S813. The segment at 830-1026 is disordered; the sequence is RLPSRFLSAQ…RGPRARLSSA (197 aa). Polar residues predominate over residues 836–847; the sequence is LSAQSHSTSPQG. Phosphoserine occurs at positions 870 and 881. T883 bears the Phosphothreonine mark. Residues 884–906 show a composition bias toward polar residues; the sequence is PGFSTRRGSPTTGFIEQKGSPTS. S892 bears the Phosphoserine mark. T894 is subject to Phosphothreonine. Phosphoserine is present on residues S903, S914, S925, S936, S945, S1003, S1009, S1024, and S1025. At T1040 the chain carries Phosphothreonine. 2 disordered regions span residues 1047–1084 and 1143–1165; these read ISAH…APDM and EEAS…SKVG. Phosphoserine occurs at positions 1048, 1068, and 1147.

The protein belongs to the FAM83 family. In terms of assembly, directly interacts (via DUF1669) with casein kinase isoforms CSNK1A1, CSNK1A1L, CSNK1D and CSNK1E. Interaction with CSNK1A1 recruits CSNK1A1 to keratin filaments. Interacts with KRT18 and probably other keratins. As to expression, expressed in the tooth follicle.

It localises to the cytoplasm. Its subcellular location is the cytoskeleton. Functionally, may play a major role in the structural organization and calcification of developing enamel. May play a role in keratin cytoskeleton disassembly by recruiting CSNK1A1 to keratin filaments. Thereby, it may regulate epithelial cell migration. The sequence is that of Protein FAM83H from Homo sapiens (Human).